The chain runs to 103 residues: MYAIVKNGGKQYKVQEGDIVLFDKMSLEPKSKVELNEVLALCKDDNLILGTPFVEGAKIEIEVINEDRAKKVVTFKKRRRKDSKTKRGFRRDFTRVRILKIAA.

This sequence belongs to the bacterial ribosomal protein bL21 family. In terms of assembly, part of the 50S ribosomal subunit. Contacts protein L20.

Its function is as follows. This protein binds to 23S rRNA in the presence of protein L20. This Wolinella succinogenes (strain ATCC 29543 / DSM 1740 / CCUG 13145 / JCM 31913 / LMG 7466 / NCTC 11488 / FDC 602W) (Vibrio succinogenes) protein is Large ribosomal subunit protein bL21.